The chain runs to 316 residues: tRNA uridine(34) hydroxylase (316 aa).

In terms of domain architecture, Rhodanese spans 136-230; the sequence is ADENTVVVDK…YLEEVPREQS (95 aa). Residue C190 is the Cysteine persulfide intermediate of the active site.

Belongs to the TrhO family.

It carries out the reaction uridine(34) in tRNA + AH2 + O2 = 5-hydroxyuridine(34) in tRNA + A + H2O. Its function is as follows. Catalyzes oxygen-dependent 5-hydroxyuridine (ho5U) modification at position 34 in tRNAs. The polypeptide is tRNA uridine(34) hydroxylase (Brucella abortus (strain 2308)).